Consider the following 729-residue polypeptide: MAKITKEIVFGNHNLILETGEVARQADGAVMASMNGTQVLVTVVWKKDGGESNDFFPLTVNYQEKFYAIGKIPGGFNKREGRPSDNETLISRLIDRPIRPLFPDNFFNEVQIIATVLSLNPEVSPDIIAMIGASAALSISGVPFNGPIGAARVGYKDGVYLLNPSRKEQEESKLDLVIAGTKDAILMVESEAQELSEDIMRGAMLYGHEMMKNVIKSIEELAREVGKSKPEWKAPEIDTVLKARINDVARNEVEAAYLIKDKQQRYQRLDELREQTISALLAENDELNADVIANMFGELERSIVRNRILDGEPRIDGRDHRTVRPISIRTKFLERTHGSCLFTRGETQAIVVATLGNERDAQILDGISGESRDRFMLHYNFPPYSVGETGQVGSPKRREIGHGRLAKRALMAVLPDANEFPYVLRIVSEITESNGSSSMATVCGTSLALMDAGVPLKAPVAGVAMGLIKEGDRYAVLTDILGDEDHLGDMDFKVAGTEKGITALQMDIKISGITNEIMEQALEQALEGRTHILGVMNNALAEHRTELSQHAPRITTMKVAEDKIRTIIGKGGATIKGLIESTGVSIDIDDSGVIQLFSPDKMALEEAQKQIKALIAEIEVGQTYQGKVSKIVDFGAFINLLPGKDGLLHISQICADRTQKVEEVLQEGQEIEVFVAGIDKQGRVKLEWKDKPQAEAKEVEDAPVSATFLTMEEQSEEINSGNKISEEEE.

2 residues coordinate Mg(2+): D485 and D491. The region spanning 552–611 is the KH domain; sequence PRITTMKVAEDKIRTIIGKGGATIKGLIESTGVSIDIDDSGVIQLFSPDKMALEEAQKQI. Positions 621 to 689 constitute an S1 motif domain; it reads GQTYQGKVSK…KQGRVKLEWK (69 aa).

This sequence belongs to the polyribonucleotide nucleotidyltransferase family. In terms of assembly, component of the RNA degradosome, which is a multiprotein complex involved in RNA processing and mRNA degradation. Mg(2+) is required as a cofactor.

The protein localises to the cytoplasm. The catalysed reaction is RNA(n+1) + phosphate = RNA(n) + a ribonucleoside 5'-diphosphate. Involved in mRNA degradation. Catalyzes the phosphorolysis of single-stranded polyribonucleotides processively in the 3'- to 5'-direction. The chain is Polyribonucleotide nucleotidyltransferase from Legionella pneumophila (strain Corby).